Consider the following 408-residue polypeptide: Aminoacylase-1B (408 aa).

His-80 provides a ligand contact to Zn(2+). Asp-82 is an active-site residue. Asp-113 is a binding site for Zn(2+). Glu-147 (proton acceptor) is an active-site residue. Residues Glu-148, Glu-175, and His-373 each coordinate Zn(2+). Position 408 is a phosphoserine (Ser-408).

This sequence belongs to the peptidase M20A family. Homodimer. It depends on Zn(2+) as a cofactor. As to expression, expressed in kidney.

It is found in the cytoplasm. The enzyme catalyses an N-acyl-L-amino acid + H2O = an L-alpha-amino acid + a carboxylate. It carries out the reaction an N-acetyl-L-cysteine-S-conjugate + H2O = an S-substituted L-cysteine + acetate. In terms of biological role, involved in the hydrolysis of N-acylated or N-acetylated amino acids (except L-aspartate). This is Aminoacylase-1B (Acy1b) from Rattus norvegicus (Rat).